An 87-amino-acid chain; its full sequence is Small ribosomal subunit protein uS17 (87 aa).

It belongs to the universal ribosomal protein uS17 family. Part of the 30S ribosomal subunit.

In terms of biological role, one of the primary rRNA binding proteins, it binds specifically to the 5'-end of 16S ribosomal RNA. This Lacticaseibacillus casei (strain BL23) (Lactobacillus casei) protein is Small ribosomal subunit protein uS17.